The primary structure comprises 379 residues: Cytochrome b (379 aa).

4 helical membrane passes run 33–53 (LGSL…FLAM), 77–98 (WTIR…YLHI), 113–133 (WNTG…GYVL), and 178–198 (FFTL…THLL). The heme b site is built by histidine 83 and histidine 97. Residues histidine 182 and histidine 196 each coordinate heme b. Histidine 201 is an a ubiquinone binding site. Transmembrane regions (helical) follow at residues 226–246 (IKDI…TLLH), 288–308 (LGGV…PMTH), 320–340 (ISQC…WIGG), and 347–367 (FTTI…ILTP).

Belongs to the cytochrome b family. As to quaternary structure, the cytochrome bc1 complex contains 11 subunits: 3 respiratory subunits (MT-CYB, CYC1 and UQCRFS1), 2 core proteins (UQCRC1 and UQCRC2) and 6 low-molecular weight proteins (UQCRH/QCR6, UQCRB/QCR7, UQCRQ/QCR8, UQCR10/QCR9, UQCR11/QCR10 and a cleavage product of UQCRFS1). This cytochrome bc1 complex then forms a dimer. Requires heme b as cofactor.

It is found in the mitochondrion inner membrane. In terms of biological role, component of the ubiquinol-cytochrome c reductase complex (complex III or cytochrome b-c1 complex) that is part of the mitochondrial respiratory chain. The b-c1 complex mediates electron transfer from ubiquinol to cytochrome c. Contributes to the generation of a proton gradient across the mitochondrial membrane that is then used for ATP synthesis. This chain is Cytochrome b (MT-CYB), found in Bradypus tridactylus (Pale-throated three-toed sloth).